The following is a 659-amino-acid chain: MTDRIRALDDATVARIAAGEVVERPASVVKELVENSLDAGAASVDVSVDAGGTDRIVVADDGRGMTGDDLRMAVRQHTTSKLDDASGLDGVGTLGFRGEALYTIGSVAELTVTTRPRNAGDTGARITVDHGDAGSVAPAGHPAGTTVEVTDLFGETPARRKYLKRAATEFGHVNRAVTRYALANPDVAVSLTHDGREVFATTGTGDVQDAALAVYGREVAQSLRTVDADPAADSVERVHGYVSDPEVTRSTREYLATFVNGRAVTDAVLREAVLDGYGDQLAPDRYPFAVLFVDCEGVDANVHPRKLEVRFEDEAGVKAAVEAGVRDALLDAGLVRAGAPRGASKPGDAEISPEHSPTDRDAGAAGGGDAAGQSDGNGQRTAASGATSESPASAFETGGGDEAADSAASTDGTRERPGSGTESRTGRFDAPAENARLPTGAGGPEADDQDTTSERDSLPDLRVLGQLHDTYVVAEAGDGLVLVDQHAADERVHYERLQARVDGASQALVAPAELELTAGEAAVFEAALGGLRELGFDAELAGRTARVTAVPAVLADALDAELARDVLSSFLADADGTPVADAADAVLADLACSPAIKGNTSLAEGSVVALLDALDACENPYACPHGRPTIVEVDGDELAARFERDYPGHAGRRREDAGN.

The interval 338–459 is disordered; the sequence is GAPRGASKPG…DTTSERDSLP (122 aa). The span at 352-362 shows a compositional bias: basic and acidic residues; that stretch reads SPEHSPTDRDA. A compositionally biased stretch (polar residues) spans 374–391; that stretch reads SDGNGQRTAASGATSESP.

This sequence belongs to the DNA mismatch repair MutL/HexB family.

Functionally, this protein is involved in the repair of mismatches in DNA. It is required for dam-dependent methyl-directed DNA mismatch repair. May act as a 'molecular matchmaker', a protein that promotes the formation of a stable complex between two or more DNA-binding proteins in an ATP-dependent manner without itself being part of a final effector complex. The chain is DNA mismatch repair protein MutL from Halobacterium salinarum (strain ATCC 29341 / DSM 671 / R1).